Here is a 227-residue protein sequence, read N- to C-terminus: UPF0758 protein SSA_1218 (227 aa).

An MPN domain is found at 104-226 (QIMGSQKLAR…YYSYREETDM (123 aa)). 3 residues coordinate Zn(2+): His-175, His-177, and Asp-188. Positions 175–188 (HNHPSGSVVPSRND) match the JAMM motif motif.

It belongs to the UPF0758 family.

The protein is UPF0758 protein SSA_1218 of Streptococcus sanguinis (strain SK36).